The chain runs to 172 residues: Protein-export protein SecB (172 aa).

Residues 1 to 22 (MADETSADINNPALQPNGEDTS) form a disordered region. Residues 7-20 (ADINNPALQPNGED) are compositionally biased toward polar residues.

The protein belongs to the SecB family. As to quaternary structure, homotetramer, a dimer of dimers. One homotetramer interacts with 1 SecA dimer.

Its subcellular location is the cytoplasm. One of the proteins required for the normal export of preproteins out of the cell cytoplasm. It is a molecular chaperone that binds to a subset of precursor proteins, maintaining them in a translocation-competent state. It also specifically binds to its receptor SecA. The chain is Protein-export protein SecB from Sphingopyxis alaskensis (strain DSM 13593 / LMG 18877 / RB2256) (Sphingomonas alaskensis).